Consider the following 100-residue polypeptide: ATP-dependent Clp protease adapter protein ClpS (100 aa).

This sequence belongs to the ClpS family. Binds to the N-terminal domain of the chaperone ClpA.

Its function is as follows. Involved in the modulation of the specificity of the ClpAP-mediated ATP-dependent protein degradation. The protein is ATP-dependent Clp protease adapter protein ClpS of Corynebacterium glutamicum (strain R).